Reading from the N-terminus, the 3660-residue chain is Dystrophin (3660 aa).

An actin-binding region spans residues 1 to 244 (MSAHVLWYEE…YVTSLFQVLP (244 aa)). Calponin-homology (CH) domains follow at residues 19–123 (DVQK…LHWQ) and 138–244 (TNSE…QVLP). 22 Spectrin repeats span residues 341–449 (MDLD…NLHK), 450–558 (ILMD…LLQD), 561–669 (RKWQ…QVSQ), 721–830 (EIRK…WLEY), 832–936 (NSII…QLQT), 945–1047 (RYKD…KLED), 1050–1156 (TKLQ…ALKG), 1159–1265 (DKTV…TLEE), 1268–1369 (ACWH…SLEQ), 1470–1570 (EQRL…ELEK), 1573–1678 (KLSR…LLME), 1681–1782 (KHME…FIPL), 1879–1981 (HQWY…TVLE), 2013–2103 (LSEV…RFDK), 2106–2211 (EKWR…RIEE), 2214–2321 (NILS…EIEI), 2472–2574 (FNKA…QLHE), 2577–2683 (KDST…ALES), 2686–2799 (LMLQ…HLEA), 2802–2904 (DQWK…LRRQ), 2906–2928 (DDVRTEWDKLNLRSADWQKKIDD), and 2931–3037 (ERLQ…QLHE). Residues 3052–3085 (TSVQGPWERAISPNKVPYYINHETQTTCWDHPKM) enclose the WW domain. Residues 3305–3361 (KHQAKCNICKECPIIGFRYRSLKHFNYDICQSCFFSGRVAKGHKMHYPMVEYCTPTT) form a ZZ-type; degenerate zinc finger. Cys3310, Cys3313, Cys3334, and Cys3337 together coordinate Zn(2+). 2 disordered regions span residues 3503 to 3526 (KQQHDHKGLSPLPSPPEMMPVSPQ) and 3575 to 3660 (PQAD…EATM). Composition is skewed to polar residues over residues 3582 to 3601 (NGTTLSSPSTSLQRSDSSQP) and 3637 to 3647 (QLNNSFPSSRG).

It localises to the cell membrane. Its subcellular location is the sarcolemma. It is found in the cytoplasm. The protein resides in the cytoskeleton. The protein localises to the postsynaptic cell membrane. Functionally, may play a role in anchoring the cytoskeleton to the plasma membrane. The sequence is that of Dystrophin (DMD) from Gallus gallus (Chicken).